A 283-amino-acid polypeptide reads, in one-letter code: ATP phosphoribosyltransferase (283 aa).

It belongs to the ATP phosphoribosyltransferase family. Long subfamily. It depends on Mg(2+) as a cofactor.

The protein resides in the cytoplasm. The catalysed reaction is 1-(5-phospho-beta-D-ribosyl)-ATP + diphosphate = 5-phospho-alpha-D-ribose 1-diphosphate + ATP. The protein operates within amino-acid biosynthesis; L-histidine biosynthesis; L-histidine from 5-phospho-alpha-D-ribose 1-diphosphate: step 1/9. With respect to regulation, feedback inhibited by histidine. Functionally, catalyzes the condensation of ATP and 5-phosphoribose 1-diphosphate to form N'-(5'-phosphoribosyl)-ATP (PR-ATP). Has a crucial role in the pathway because the rate of histidine biosynthesis seems to be controlled primarily by regulation of HisG enzymatic activity. The chain is ATP phosphoribosyltransferase from Methanopyrus kandleri (strain AV19 / DSM 6324 / JCM 9639 / NBRC 100938).